A 172-amino-acid chain; its full sequence is Small ribosomal subunit protein uS5 (172 aa).

Positions 17-80 (LREKMIAVNR…DEARRKMVKV (64 aa)) constitute an S5 DRBM domain.

It belongs to the universal ribosomal protein uS5 family. In terms of assembly, part of the 30S ribosomal subunit. Contacts proteins S4 and S8.

Its function is as follows. With S4 and S12 plays an important role in translational accuracy. In terms of biological role, located at the back of the 30S subunit body where it stabilizes the conformation of the head with respect to the body. The sequence is that of Small ribosomal subunit protein uS5 from Ralstonia nicotianae (strain ATCC BAA-1114 / GMI1000) (Ralstonia solanacearum).